The primary structure comprises 181 residues: MAAGEEAPSILLPAVYDIVWSAVVFVVLLVVIWKYALPRVYAMLDGRTEAIAGGIEKAERAQAEADAAKAELTAQLVEARAEAGRIREQARVDASVIAAEIKEQATADAARITASGTQQIEAERQQAVVSLRSEVGSLAIDLASGVIGQSLADDQRSTALVDRFLADLEASETAGRTGSAS.

A helical membrane pass occupies residues 12-32 (LPAVYDIVWSAVVFVVLLVVI).

This sequence belongs to the ATPase B chain family. In terms of assembly, F-type ATPases have 2 components, F(1) - the catalytic core - and F(0) - the membrane proton channel. F(1) has five subunits: alpha(3), beta(3), gamma(1), delta(1), epsilon(1). F(0) has three main subunits: a(1), b(2) and c(10-14). The alpha and beta chains form an alternating ring which encloses part of the gamma chain. F(1) is attached to F(0) by a central stalk formed by the gamma and epsilon chains, while a peripheral stalk is formed by the delta and b chains.

It is found in the cell membrane. F(1)F(0) ATP synthase produces ATP from ADP in the presence of a proton or sodium gradient. F-type ATPases consist of two structural domains, F(1) containing the extramembraneous catalytic core and F(0) containing the membrane proton channel, linked together by a central stalk and a peripheral stalk. During catalysis, ATP synthesis in the catalytic domain of F(1) is coupled via a rotary mechanism of the central stalk subunits to proton translocation. Functionally, component of the F(0) channel, it forms part of the peripheral stalk, linking F(1) to F(0). This chain is ATP synthase subunit b, found in Clavibacter sepedonicus (Clavibacter michiganensis subsp. sepedonicus).